The chain runs to 805 residues: Leucine--tRNA ligase (805 aa).

The 'HIGH' region signature appears at 39–50 (PYPSGKGLHVGH). Residues 583-587 (KMSKS) carry the 'KMSKS' region motif. Residue Lys-586 participates in ATP binding.

It belongs to the class-I aminoacyl-tRNA synthetase family.

It localises to the cytoplasm. The catalysed reaction is tRNA(Leu) + L-leucine + ATP = L-leucyl-tRNA(Leu) + AMP + diphosphate. In Mycoplasmoides gallisepticum (strain R(low / passage 15 / clone 2)) (Mycoplasma gallisepticum), this protein is Leucine--tRNA ligase.